Here is a 204-residue protein sequence, read N- to C-terminus: LexA repressor (204 aa).

A DNA-binding region (H-T-H motif) is located at residues 28-48 (VREIGQAVGLASSSTVHGHLS). Residues S126 and K164 each act as for autocatalytic cleavage activity in the active site.

Belongs to the peptidase S24 family. In terms of assembly, homodimer.

The catalysed reaction is Hydrolysis of Ala-|-Gly bond in repressor LexA.. Functionally, represses a number of genes involved in the response to DNA damage (SOS response), including recA and lexA. In the presence of single-stranded DNA, RecA interacts with LexA causing an autocatalytic cleavage which disrupts the DNA-binding part of LexA, leading to derepression of the SOS regulon and eventually DNA repair. This chain is LexA repressor, found in Bacillus mycoides (strain KBAB4) (Bacillus weihenstephanensis).